Consider the following 906-residue polypeptide: Protein translocase subunit SecA (906 aa).

ATP contacts are provided by residues glutamine 86, 104–108 (GEGKT), and aspartate 511. 2 stretches are compositionally biased toward basic and acidic residues: residues 853–865 (HESV…RHDE) and 877–888 (VRREGPKVKRND). The tract at residues 853 to 906 (HESVIDNNQRHDEDEQEEAPKVQQVRREGPKVKRNDPCPCGSGKKYKQCHSKVE) is disordered. The Zn(2+) site is built by cysteine 890, cysteine 892, cysteine 901, and histidine 902. The span at 896-906 (KKYKQCHSKVE) shows a compositional bias: basic residues.

The protein belongs to the SecA family. As to quaternary structure, monomer and homodimer. Part of the essential Sec protein translocation apparatus which comprises SecA, SecYEG and auxiliary proteins SecDF-YajC and YidC. It depends on Zn(2+) as a cofactor.

The protein localises to the cell inner membrane. The protein resides in the cytoplasm. It catalyses the reaction ATP + H2O + cellular proteinSide 1 = ADP + phosphate + cellular proteinSide 2.. In terms of biological role, part of the Sec protein translocase complex. Interacts with the SecYEG preprotein conducting channel. Has a central role in coupling the hydrolysis of ATP to the transfer of proteins into and across the cell membrane, serving both as a receptor for the preprotein-SecB complex and as an ATP-driven molecular motor driving the stepwise translocation of polypeptide chains across the membrane. In Francisella tularensis subsp. mediasiatica (strain FSC147), this protein is Protein translocase subunit SecA.